A 463-amino-acid polypeptide reads, in one-letter code: L-seryl-tRNA(Sec) selenium transferase (463 aa).

An N6-(pyridoxal phosphate)lysine modification is found at lysine 295.

The protein belongs to the SelA family. As to quaternary structure, homodecamer; pentamer of dimers. Binds only one seryl-tRNA(Sec) per dimer. Pyridoxal 5'-phosphate serves as cofactor.

The protein resides in the cytoplasm. It catalyses the reaction L-seryl-tRNA(Sec) + selenophosphate + H(+) = L-selenocysteinyl-tRNA(Sec) + phosphate. The protein operates within aminoacyl-tRNA biosynthesis; selenocysteinyl-tRNA(Sec) biosynthesis; selenocysteinyl-tRNA(Sec) from L-seryl-tRNA(Sec) (bacterial route): step 1/1. Functionally, converts seryl-tRNA(Sec) to selenocysteinyl-tRNA(Sec) required for selenoprotein biosynthesis. This is L-seryl-tRNA(Sec) selenium transferase from Escherichia coli O81 (strain ED1a).